Consider the following 627-residue polypeptide: Neutral endopeptidase (627 aa).

A Peptidase M13 domain is found at 1-627 (MTRIQDDLFA…RAPENRLKIW (627 aa)). His-475 lines the Zn(2+) pocket. Glu-476 is a catalytic residue. Residues His-479 and Glu-535 each coordinate Zn(2+). Asp-539 functions as the Proton donor in the catalytic mechanism.

Belongs to the peptidase M13 family. As to quaternary structure, monomer. Zn(2+) is required as a cofactor.

It is found in the cytoplasm. In terms of biological role, endopeptidase with broad substrate specificity for several oligopeptides. This Lactococcus lactis subsp. cremoris (Streptococcus cremoris) protein is Neutral endopeptidase (pepO).